The sequence spans 182 residues: Adenine phosphoribosyltransferase (182 aa).

The protein belongs to the purine/pyrimidine phosphoribosyltransferase family. Homodimer.

It localises to the cytoplasm. It catalyses the reaction AMP + diphosphate = 5-phospho-alpha-D-ribose 1-diphosphate + adenine. Its pathway is purine metabolism; AMP biosynthesis via salvage pathway; AMP from adenine: step 1/1. Functionally, catalyzes a salvage reaction resulting in the formation of AMP, that is energically less costly than de novo synthesis. This Saccharopolyspora erythraea (strain ATCC 11635 / DSM 40517 / JCM 4748 / NBRC 13426 / NCIMB 8594 / NRRL 2338) protein is Adenine phosphoribosyltransferase.